The chain runs to 122 residues: Ig heavy chain V region M603 (122 aa).

The region spanning 1–121 is the Ig-like domain; sequence EVKLVESGGG…WGAGTTVTVS (121 aa).

In Mus musculus (Mouse), this protein is Ig heavy chain V region M603.